Consider the following 620-residue polypeptide: Endoglucanase 6 (620 aa).

The first 22 residues, 1–22, serve as a signal peptide directing secretion; it reads MEKFAPVAALLLLLLCFPVAFS. Asp-78 serves as the catalytic Nucleophile. Active-site residues include His-411, Asp-463, and Glu-472. N-linked (GlcNAc...) asparagine glycosylation is found at Asn-554 and Asn-564.

This sequence belongs to the glycosyl hydrolase 9 (cellulase E) family.

The protein resides in the secreted. It carries out the reaction Endohydrolysis of (1-&gt;4)-beta-D-glucosidic linkages in cellulose, lichenin and cereal beta-D-glucans.. The chain is Endoglucanase 6 from Arabidopsis thaliana (Mouse-ear cress).